A 258-amino-acid polypeptide reads, in one-letter code: Pimeloyl-[acyl-carrier protein] methyl ester esterase (258 aa).

The 225-residue stretch at 17–241 (VYLIHGWGAN…KAAHAPFLSH (225 aa)) folds into the AB hydrolase-1 domain. Substrate contacts are provided by residues tryptophan 23, 83-84 (SL), and 145-149 (FLQLQ). Serine 83 functions as the Nucleophile in the catalytic mechanism. Catalysis depends on residues aspartate 207 and histidine 235. Histidine 235 provides a ligand contact to substrate.

The protein belongs to the AB hydrolase superfamily. Carboxylesterase BioH family. In terms of assembly, monomer.

Its subcellular location is the cytoplasm. It catalyses the reaction 6-carboxyhexanoyl-[ACP] methyl ester + H2O = 6-carboxyhexanoyl-[ACP] + methanol + H(+). The protein operates within cofactor biosynthesis; biotin biosynthesis. The physiological role of BioH is to remove the methyl group introduced by BioC when the pimeloyl moiety is complete. It allows to synthesize pimeloyl-ACP via the fatty acid synthetic pathway through the hydrolysis of the ester bonds of pimeloyl-ACP esters. The protein is Pimeloyl-[acyl-carrier protein] methyl ester esterase of Neisseria meningitidis serogroup B (strain ATCC BAA-335 / MC58).